The primary structure comprises 363 residues: MVDIIFNSSFLGDMGDHSKKKSGFAMCVGCGSQIHDQYILRVSPDLEWHAACLKCAECSQYLDETCTCFVRDGKTYCKRDYVRLFGIKCAKCNLGFSSSDLVMRARDNVYHIECFRCSVCSRQLLPGDEFSLRDEELLCRADHSLLMERTSAGSPISPGHIHSNRSLHLAAEPVTVRAPHRNHVHKQSEKTTRVRTVLNEKQLHTLRTCYNANPRPDALMREQLVEMTGLSPRVIRVWFQNKRCKDKKRSILMKQLQQQQHSDKTVSIFSLQGLTGTPLVARSPIRHDNTVQGNSVEVQTYQPPWKALSEFALQSDLDQPAFQQLVPFSESGSLGNSSGSDVTSLSSHLPDTPNSMVPSPVET.

LIM zinc-binding domains lie at 27–80 and 89–143; these read CVGC…CKRD and CAKC…RADH. Positions 191–250 form a DNA-binding region, homeobox; sequence TTRVRTVLNEKQLHTLRTCYNANPRPDALMREQLVEMTGLSPRVIRVWFQNKRCKDKKRS. The interval 328 to 363 is disordered; it reads FSESGSLGNSSGSDVTSLSSHLPDTPNSMVPSPVET. The segment covering 329–340 has biased composition (low complexity); it reads SESGSLGNSSGS. The segment covering 341–363 has biased composition (polar residues); the sequence is DVTSLSSHLPDTPNSMVPSPVET.

It is found in the nucleus. Binds to one of the cis-acting domain of the insulin gene enhancer. May be involved in subtype specialization of primary motoneurons. This Oncorhynchus tshawytscha (Chinook salmon) protein is Insulin gene enhancer protein ISL-3 (isl3).